We begin with the raw amino-acid sequence, 274 residues long: Thiamine kinase (274 aa).

The protein belongs to the thiamine kinase family.

It catalyses the reaction thiamine + ATP = thiamine phosphate + ADP + H(+). It functions in the pathway cofactor biosynthesis; thiamine diphosphate biosynthesis; thiamine phosphate from thiamine: step 1/1. Catalyzes the ATP-dependent phosphorylation of thiamine to thiamine phosphate. Is involved in thiamine salvage. In Salmonella paratyphi A (strain ATCC 9150 / SARB42), this protein is Thiamine kinase.